The following is a 293-amino-acid chain: Ribosomal RNA small subunit methyltransferase A (293 aa).

S-adenosyl-L-methionine contacts are provided by N38, V40, G65, E86, D116, and N135.

It belongs to the class I-like SAM-binding methyltransferase superfamily. rRNA adenine N(6)-methyltransferase family. RsmA subfamily.

It localises to the cytoplasm. It catalyses the reaction adenosine(1518)/adenosine(1519) in 16S rRNA + 4 S-adenosyl-L-methionine = N(6)-dimethyladenosine(1518)/N(6)-dimethyladenosine(1519) in 16S rRNA + 4 S-adenosyl-L-homocysteine + 4 H(+). Specifically dimethylates two adjacent adenosines (A1518 and A1519) in the loop of a conserved hairpin near the 3'-end of 16S rRNA in the 30S particle. May play a critical role in biogenesis of 30S subunits. In Nocardia farcinica (strain IFM 10152), this protein is Ribosomal RNA small subunit methyltransferase A.